We begin with the raw amino-acid sequence, 963 residues long: Integrator complex subunit 4 (963 aa).

Lys26 is modified (N6-acetyllysine). HEAT repeat units lie at residues 66 to 105, 145 to 183, 190 to 228, 229 to 263, 277 to 313, 369 to 405, 406 to 444, and 446 to 484; these read AESVEGVVRILLEHYYKENDPSVRLKIASLLGLLSKTAGF, QAIQMRLVDVACKHLTDTSHGVRNKCLQLLGNLGSLEKS, GLAARDVQKIIGDYFSDQDPRVRTAAIKAMLQLHERGLK, LHQTIYNQACKLLSDDYEQVRSAAVQLIWVVSQLY, IRLVDDAFGKICHMVSDGSWVVRVQAAKLLGSMEQVS, NLIESGACGAFVHGLEDEMYEVRIAAVEALCMLAQSS, PSFAEKCLDFLVDMFNDEIEEVRLQSIHTMRKISNNITL, and EDQLDTVLAVLEDSSRDIREALHELLCCTNVSTKEGIHL. A Glycyl lysine isopeptide (Lys-Gly) (interchain with G-Cter in SUMO1); alternate cross-link involves residue Lys791. Residue Lys791 forms a Glycyl lysine isopeptide (Lys-Gly) (interchain with G-Cter in SUMO2); alternate linkage.

It belongs to the Integrator subunit 4 family. Component of the Integrator complex, composed of core subunits INTS1, INTS2, INTS3, INTS4, INTS5, INTS6, INTS7, INTS8, INTS9/RC74, INTS10, INTS11/CPSF3L, INTS12, INTS13, INTS14 and INTS15. The core complex associates with protein phosphatase 2A subunits PPP2CA and PPP2R1A, to form the Integrator-PP2A (INTAC) complex. INTS4 is part of the RNA endonuclease subcomplex, composed of INTS4, INTS9, INTS11 and inositol hexakisphosphate (InsP6). Interacts with BRAT1; interaction is required for the assembly of the RNA endonuclease subcomplex.

Its subcellular location is the nucleus. The protein resides in the cytoplasm. In terms of biological role, component of the integrator complex, a multiprotein complex that terminates RNA polymerase II (Pol II) transcription in the promoter-proximal region of genes. The integrator complex provides a quality checkpoint during transcription elongation by driving premature transcription termination of transcripts that are unfavorably configured for transcriptional elongation: the complex terminates transcription by (1) catalyzing dephosphorylation of the C-terminal domain (CTD) of Pol II subunit POLR2A/RPB1 and SUPT5H/SPT5, (2) degrading the exiting nascent RNA transcript via endonuclease activity and (3) promoting the release of Pol II from bound DNA. The integrator complex is also involved in terminating the synthesis of non-coding Pol II transcripts, such as enhancer RNAs (eRNAs), small nuclear RNAs (snRNAs), telomerase RNAs and long non-coding RNAs (lncRNAs). Within the integrator complex, INTS4 acts as an scaffold that links INTS9 and INTS11. Mediates recruitment of cytoplasmic dynein to the nuclear envelope, probably as component of the integrator complex. The sequence is that of Integrator complex subunit 4 from Homo sapiens (Human).